The following is a 464-amino-acid chain: Cytochrome P450 85A1 (464 aa).

Residues 2-22 (AFFLIFLSSFFGLCIFCTALL) traverse the membrane as a helical segment. A heme-binding site is contributed by Cys414.

Belongs to the cytochrome P450 family. It depends on heme as a cofactor. Expressed in sub-meristematic regions of shoot and root apexes, in zones undergoing lateral root formation, in fruits, and in all flower parts, with a high expression in young flower buds and at the joint in the pedicel.

It is found in the membrane. It catalyses the reaction 6-deoxocastasterone + reduced [NADPH--hemoprotein reductase] + O2 = 6alpha-hydroxycastasterone + oxidized [NADPH--hemoprotein reductase] + H2O + H(+). The catalysed reaction is 6alpha-hydroxycastasterone + reduced [NADPH--hemoprotein reductase] + O2 = castasterone + oxidized [NADPH--hemoprotein reductase] + 2 H2O + H(+). It carries out the reaction 6-deoxocastasterone + 2 reduced [NADPH--hemoprotein reductase] + 2 O2 = castasterone + 2 oxidized [NADPH--hemoprotein reductase] + 3 H2O + 2 H(+). Its pathway is plant hormone biosynthesis; brassinosteroid biosynthesis. Catalyzes the C6-oxidation step in brassinosteroids biosynthesis. Converts 6-deoxocastasterone (6-deoxoCS) to castasterone (CS). May also convert 6-deoxoteasterone (6-deoxoTE) to teasterone (TE), 3-dehydro-6-deoxoteasterone (6-deoxo3DT, 6-deoxo3DHT) to 3-dehydroteasterone (3DT, 3-DHT), and 6-deoxotyphasterol (6-deoxoTY) to typhasterol (TY), but not castasterone (CS) to brassinolide (BL). This is Cytochrome P450 85A1 from Solanum lycopersicum (Tomato).